A 110-amino-acid chain; its full sequence is Large ribosomal subunit protein uL22 (110 aa).

The protein belongs to the universal ribosomal protein uL22 family. Part of the 50S ribosomal subunit.

In terms of biological role, this protein binds specifically to 23S rRNA; its binding is stimulated by other ribosomal proteins, e.g. L4, L17, and L20. It is important during the early stages of 50S assembly. It makes multiple contacts with different domains of the 23S rRNA in the assembled 50S subunit and ribosome. Functionally, the globular domain of the protein is located near the polypeptide exit tunnel on the outside of the subunit, while an extended beta-hairpin is found that lines the wall of the exit tunnel in the center of the 70S ribosome. This Variovorax paradoxus (strain S110) protein is Large ribosomal subunit protein uL22.